A 238-amino-acid chain; its full sequence is Ribonuclease PH (238 aa).

Residues arginine 86 and glycine 124–arginine 126 each bind phosphate.

This sequence belongs to the RNase PH family. Homohexameric ring arranged as a trimer of dimers.

The catalysed reaction is tRNA(n+1) + phosphate = tRNA(n) + a ribonucleoside 5'-diphosphate. Functionally, phosphorolytic 3'-5' exoribonuclease that plays an important role in tRNA 3'-end maturation. Removes nucleotide residues following the 3'-CCA terminus of tRNAs; can also add nucleotides to the ends of RNA molecules by using nucleoside diphosphates as substrates, but this may not be physiologically important. Probably plays a role in initiation of 16S rRNA degradation (leading to ribosome degradation) during starvation. In Dichelobacter nodosus (strain VCS1703A), this protein is Ribonuclease PH.